A 510-amino-acid chain; its full sequence is NKAP family protein (510 aa).

Basic and acidic residues predominate over residues 1–22 (MSHRERDRDRDRDSDRDRDRNR). Disordered stretches follow at residues 1–128 (MSHR…VEIQ), 149–220 (ERKD…NYNG), and 239–401 (VYER…PISE). A compositionally biased stretch (basic residues) spans 23 to 39 (YSRSRSRGSRSRSRSRS). A compositionally biased stretch (basic and acidic residues) spans 40–89 (RSRDRNRNRDYNKDRSSNRDSYYNDRDYKKDRSSNRDRDYYDRDRNRDYK). Gly residues predominate over residues 96-105 (SSGGGGGGSG). Low complexity-rich tracts occupy residues 112 to 123 (SSSYRESNSNNS) and 184 to 219 (NNNN…SNYN). Residues 262 to 273 (NKKKSKKSRRKS) are compositionally biased toward basic residues. Low complexity predominate over residues 274–283 (SSNSDSSSSD). Over residues 292–322 (REKRKKSKSRKDKKKRKEKKKHQRKSSKRSS) the composition is skewed to basic residues. Over residues 342-351 (DSDRSDSEGR) the composition is skewed to basic and acidic residues. Over residues 352 to 367 (SRKKRSKKRSKKRHDH) the composition is skewed to basic residues. Residues 368-383 (HKESVHDASMWEEKVE) show a composition bias toward basic and acidic residues.

Belongs to the NKAP family.

This Dictyostelium discoideum (Social amoeba) protein is NKAP family protein.